We begin with the raw amino-acid sequence, 318 residues long: NADH-ubiquinone oxidoreductase chain 1 (318 aa).

8 helical membrane-spanning segments follow: residues 3–23 (MVNL…LTLI), 70–90 (MFII…IPLP), 100–120 (LAVL…LWSG), 146–166 (LAII…STLI), 171–191 (HTWL…STLA), 222–242 (LFFM…AILF), 253–273 (ELYT…FLWI), and 294–314 (LPLT…MAGI).

The protein belongs to the complex I subunit 1 family.

It is found in the mitochondrion inner membrane. The catalysed reaction is a ubiquinone + NADH + 5 H(+)(in) = a ubiquinol + NAD(+) + 4 H(+)(out). In terms of biological role, core subunit of the mitochondrial membrane respiratory chain NADH dehydrogenase (Complex I) that is believed to belong to the minimal assembly required for catalysis. Complex I functions in the transfer of electrons from NADH to the respiratory chain. The immediate electron acceptor for the enzyme is believed to be ubiquinone. The sequence is that of NADH-ubiquinone oxidoreductase chain 1 (MT-ND1) from Pteropus vampyrus (Large flying fox).